We begin with the raw amino-acid sequence, 511 residues long: Ribonuclease Y (511 aa).

The chain crosses the membrane as a helical span at residues 3–23; the sequence is VGILIGIIILGVVGFIQYTLI. The region spanning 201 to 286 is the KH domain; that stretch reads TVHVVALPND…EMVERAIKDV (86 aa). In terms of domain architecture, HD spans 327-420; sequence VLKHSIEVSY…VQAADAISAA (94 aa).

The protein belongs to the RNase Y family.

The protein resides in the cell membrane. Endoribonuclease that initiates mRNA decay. The chain is Ribonuclease Y from Clostridium perfringens (strain SM101 / Type A).